We begin with the raw amino-acid sequence, 348 residues long: Phosphoribosylformylglycinamidine cyclo-ligase (348 aa).

The protein belongs to the AIR synthase family.

It localises to the cytoplasm. The catalysed reaction is 2-formamido-N(1)-(5-O-phospho-beta-D-ribosyl)acetamidine + ATP = 5-amino-1-(5-phospho-beta-D-ribosyl)imidazole + ADP + phosphate + H(+). Its pathway is purine metabolism; IMP biosynthesis via de novo pathway; 5-amino-1-(5-phospho-D-ribosyl)imidazole from N(2)-formyl-N(1)-(5-phospho-D-ribosyl)glycinamide: step 2/2. The chain is Phosphoribosylformylglycinamidine cyclo-ligase from Geotalea daltonii (strain DSM 22248 / JCM 15807 / FRC-32) (Geobacter daltonii).